The chain runs to 180 residues: Segregation and condensation protein B (180 aa).

It belongs to the ScpB family. Homodimer. Homodimerization may be required to stabilize the binding of ScpA to the Smc head domains. Component of a cohesin-like complex composed of ScpA, ScpB and the Smc homodimer, in which ScpA and ScpB bind to the head domain of Smc. The presence of the three proteins is required for the association of the complex with DNA.

Its subcellular location is the cytoplasm. Functionally, participates in chromosomal partition during cell division. May act via the formation of a condensin-like complex containing Smc and ScpA that pull DNA away from mid-cell into both cell halves. This is Segregation and condensation protein B from Staphylococcus aureus (strain MSSA476).